The following is a 445-amino-acid chain: ATP synthase subunit b-delta (445 aa).

Positions 1-168 (MSTFIGQLVG…PAAAEVERPV (168 aa)) are ATP synthase subunit b. The helical transmembrane segment at 4 to 24 (FIGQLVGFAAIVFLVWRYVVP) threads the bilayer. An ATP synthase subunit delta region spans residues 169 to 445 (AAKMRSASRR…LTAAEAQLPD (277 aa)).

In the N-terminal section; belongs to the ATPase B chain family. This sequence in the C-terminal section; belongs to the ATPase delta chain family. F-type ATPases have 2 components, F(1) - the catalytic core - and F(0) - the membrane proton channel. F(1) has five subunits: alpha(3), beta(3), gamma(1), delta(1), epsilon(1). F(0) has three main subunits: a(1), b(2) and c(10-14). The alpha and beta chains form an alternating ring which encloses part of the gamma chain. F(1) is attached to F(0) by a central stalk formed by the gamma and epsilon chains, while a peripheral stalk is formed by the delta and b chains.

It localises to the cell membrane. In terms of biological role, f(1)F(0) ATP synthase produces ATP from ADP in the presence of a proton or sodium gradient. F-type ATPases consist of two structural domains, F(1) containing the extramembraneous catalytic core and F(0) containing the membrane proton channel, linked together by a central stalk and a peripheral stalk. During catalysis, ATP synthesis in the catalytic domain of F(1) is coupled via a rotary mechanism of the central stalk subunits to proton translocation. Functionally, this fusion protein includes a component of the F(0) channel (subunit b) and of the F(1) subunit (subunit delta). Two copies of subunit b and one of delta together form the peripheral 'stator' stalk which links F(1) to F(0). This is ATP synthase subunit b-delta (atpFH) from Mycobacterium ulcerans (strain Agy99).